A 219-amino-acid chain; its full sequence is Polysialic acid transport ATP-binding protein KpsT (219 aa).

The ABC transporter domain maps to 2–218 (IKIENLTKSY…TEAIADYKKD (217 aa)). 38–45 (GQNGAGKS) lines the ATP pocket.

The protein belongs to the ABC transporter superfamily.

It localises to the cell inner membrane. Functionally, putative ATP-binding protein, and an energy coupling component for the transport of polysialic acid across the cytoplasmic membrane. This Escherichia coli protein is Polysialic acid transport ATP-binding protein KpsT (kpsT).